A 280-amino-acid chain; its full sequence is Adenosylcobinamide-GDP ribazoletransferase (280 aa).

6 consecutive transmembrane segments (helical) span residues 44–64 (GVGV…LFVL), 69–89 (STPL…TGAF), 111–131 (LVIM…MLAL), 135–155 (VALL…ALFV), 189–209 (ISVA…ALVI), and 226–246 (ALLQ…AVMA).

The protein belongs to the CobS family. The cofactor is Mg(2+).

It localises to the cell inner membrane. It carries out the reaction alpha-ribazole + adenosylcob(III)inamide-GDP = adenosylcob(III)alamin + GMP + H(+). The enzyme catalyses alpha-ribazole 5'-phosphate + adenosylcob(III)inamide-GDP = adenosylcob(III)alamin 5'-phosphate + GMP + H(+). The protein operates within cofactor biosynthesis; adenosylcobalamin biosynthesis; adenosylcobalamin from cob(II)yrinate a,c-diamide: step 7/7. Joins adenosylcobinamide-GDP and alpha-ribazole to generate adenosylcobalamin (Ado-cobalamin). Also synthesizes adenosylcobalamin 5'-phosphate from adenosylcobinamide-GDP and alpha-ribazole 5'-phosphate. The polypeptide is Adenosylcobinamide-GDP ribazoletransferase (Albidiferax ferrireducens (strain ATCC BAA-621 / DSM 15236 / T118) (Rhodoferax ferrireducens)).